A 317-amino-acid chain; its full sequence is Aspartate carbamoyltransferase catalytic subunit (317 aa).

Carbamoyl phosphate-binding residues include Arg55 and Thr56. Position 83 (Lys83) interacts with L-aspartate. Carbamoyl phosphate contacts are provided by Arg105, His138, and Gln141. 2 residues coordinate L-aspartate: Arg171 and Arg225. Carbamoyl phosphate-binding residues include Gly266 and Pro267.

It belongs to the aspartate/ornithine carbamoyltransferase superfamily. ATCase family. Heterododecamer (2C3:3R2) of six catalytic PyrB chains organized as two trimers (C3), and six regulatory PyrI chains organized as three dimers (R2).

It catalyses the reaction carbamoyl phosphate + L-aspartate = N-carbamoyl-L-aspartate + phosphate + H(+). It participates in pyrimidine metabolism; UMP biosynthesis via de novo pathway; (S)-dihydroorotate from bicarbonate: step 2/3. Functionally, catalyzes the condensation of carbamoyl phosphate and aspartate to form carbamoyl aspartate and inorganic phosphate, the committed step in the de novo pyrimidine nucleotide biosynthesis pathway. The sequence is that of Aspartate carbamoyltransferase catalytic subunit from Mycobacteroides abscessus (strain ATCC 19977 / DSM 44196 / CCUG 20993 / CIP 104536 / JCM 13569 / NCTC 13031 / TMC 1543 / L948) (Mycobacterium abscessus).